Reading from the N-terminus, the 526-residue chain is MMTAPSDTEGYTGGQGDSPDSPDRNRQRNLVDDHNHNQGQDDGYSQGHVTGTGLHPLHQSQGRYPRASSRRASAAPLNYDVPDDYAHLEASNISPVQNPDEDPITRLDTLERVRTRDRDYLREQRRKPLPPPQEPESSAEDYEREKQAGVVAKRQKVSRLATELYTISYLIFFSLLGTLARLGLQALTSAYPQSPIIFPSIWPNFAGCVVMGFLAEDRMLFRPDWGQQQPNPKKDDDDDEEAKDIDPAAAKKAHMALKKTIPLYVGLATGFCGSFTSFSSFIRDIYLALSNDLAAHGSSAAPVSRNGGYSFMALLAVTITTISLSLSGLFAGAHLAIAIATLFTRFDLGLPYTFVSRILDRLIVLLGFGCWLGAVLLSIWPPDRHSAQPEKERWRGTATFALVFAPLGCLTRFYASAHLNGRLPSFPLGTFVVNMLGTAVLGMAWDLNHVPSLGGVVGCQVLQGVADGFCGCLTTVSTWVSELAALRRRHAYVYGGASVGGGLALMVVVMGSLRWTEGFGEVKCIS.

Disordered stretches follow at residues 1–73 (MMTA…RRAS) and 90–149 (ASNI…KQAG). Residues 1–159 (MMTAPSDTEG…VVAKRQKVSR (159 aa)) lie on the Cytoplasmic side of the membrane. Basic and acidic residues-rich tracts occupy residues 21-36 (SPDRNRQRNLVDDHNH) and 103-123 (PITRLDTLERVRTRDRDYLRE). The helical transmembrane segment at 160-180 (LATELYTISYLIFFSLLGTLA) threads the bilayer. The Extracellular portion of the chain corresponds to 181 to 194 (RLGLQALTSAYPQS). The helical transmembrane segment at 195-215 (PIIFPSIWPNFAGCVVMGFLA) threads the bilayer. Topologically, residues 216–260 (EDRMLFRPDWGQQQPNPKKDDDDDEEAKDIDPAAAKKAHMALKKT) are cytoplasmic. Residues 223–242 (PDWGQQQPNPKKDDDDDEEA) are disordered. A helical transmembrane segment spans residues 261-281 (IPLYVGLATGFCGSFTSFSSF). Residues 282 to 310 (IRDIYLALSNDLAAHGSSAAPVSRNGGYS) are Extracellular-facing. Residues 311–331 (FMALLAVTITTISLSLSGLFA) traverse the membrane as a helical segment. Residues 332-361 (GAHLAIAIATLFTRFDLGLPYTFVSRILDR) lie on the Cytoplasmic side of the membrane. A helical membrane pass occupies residues 362 to 382 (LIVLLGFGCWLGAVLLSIWPP). Residues 383-398 (DRHSAQPEKERWRGTA) lie on the Extracellular side of the membrane. The chain crosses the membrane as a helical span at residues 399–419 (TFALVFAPLGCLTRFYASAHL). The Cytoplasmic portion of the chain corresponds to 420-424 (NGRLP). The helical transmembrane segment at 425 to 445 (SFPLGTFVVNMLGTAVLGMAW) threads the bilayer. The Extracellular portion of the chain corresponds to 446–452 (DLNHVPS). A helical transmembrane segment spans residues 453–473 (LGGVVGCQVLQGVADGFCGCL). The Cytoplasmic segment spans residues 474 to 492 (TTVSTWVSELAALRRRHAY). A helical transmembrane segment spans residues 493 to 513 (VYGGASVGGGLALMVVVMGSL). The Extracellular portion of the chain corresponds to 514–526 (RWTEGFGEVKCIS).

The protein belongs to the fluoride channel Fluc/FEX (TC 1.A.43) family.

The protein localises to the cell membrane. It carries out the reaction fluoride(in) = fluoride(out). In terms of biological role, fluoride channel required for the rapid expulsion of cytoplasmic fluoride. The chain is Fluoride export protein 1 from Neurospora crassa (strain ATCC 24698 / 74-OR23-1A / CBS 708.71 / DSM 1257 / FGSC 987).